The chain runs to 217 residues: Probable transaldolase (217 aa).

Lysine 84 (schiff-base intermediate with substrate) is an active-site residue.

The protein belongs to the transaldolase family. Type 3B subfamily.

The protein localises to the cytoplasm. It catalyses the reaction D-sedoheptulose 7-phosphate + D-glyceraldehyde 3-phosphate = D-erythrose 4-phosphate + beta-D-fructose 6-phosphate. It participates in carbohydrate degradation; pentose phosphate pathway; D-glyceraldehyde 3-phosphate and beta-D-fructose 6-phosphate from D-ribose 5-phosphate and D-xylulose 5-phosphate (non-oxidative stage): step 2/3. Functionally, transaldolase is important for the balance of metabolites in the pentose-phosphate pathway. The chain is Probable transaldolase from Roseiflexus castenholzii (strain DSM 13941 / HLO8).